The primary structure comprises 449 residues: Elongation factor 1-alpha (449 aa).

Positions 5 to 230 (KVHINIVVIG…DQINEPKRPS (226 aa)) constitute a tr-type G domain. The interval 14–21 (GHVDSGKS) is G1. 14–21 (GHVDSGKS) serves as a coordination point for GTP. N6,N6-dimethyllysine is present on Lys-55. A G2 region spans residues 70–74 (GITID). An N6,N6,N6-trimethyllysine modification is found at Lys-79. The G3 stretch occupies residues 91–94 (DAPG). GTP contacts are provided by residues 91–95 (DAPGH) and 153–156 (NKMD). Positions 153-156 (NKMD) are G4. Residue Lys-187 is modified to N6,N6,N6-trimethyllysine. The tract at residues 194-196 (SGF) is G5. At Lys-261 the chain carries N6-methyllysine. At Glu-289 the chain carries 5-glutamyl glycerylphosphorylethanolamine. Residue Lys-306 is modified to N6,N6,N6-trimethyllysine. Residue Glu-362 is modified to 5-glutamyl glycerylphosphorylethanolamine. N6,N6,N6-trimethyllysine is present on Lys-396.

Belongs to the TRAFAC class translation factor GTPase superfamily. Classic translation factor GTPase family. EF-Tu/EF-1A subfamily.

The protein localises to the cytoplasm. In terms of biological role, this protein promotes the GTP-dependent binding of aminoacyl-tRNA to the A-site of ribosomes during protein biosynthesis. The chain is Elongation factor 1-alpha from Daucus carota (Wild carrot).